A 648-amino-acid polypeptide reads, in one-letter code: Biosynthetic arginine decarboxylase (648 aa).

Lys-109 carries the post-translational modification N6-(pyridoxal phosphate)lysine. Residue 291-301 (IDVGGGLGIDF) coordinates substrate.

The protein belongs to the Orn/Lys/Arg decarboxylase class-II family. SpeA subfamily. It depends on Mg(2+) as a cofactor. The cofactor is pyridoxal 5'-phosphate.

It carries out the reaction L-arginine + H(+) = agmatine + CO2. It participates in amine and polyamine biosynthesis; agmatine biosynthesis; agmatine from L-arginine: step 1/1. In terms of biological role, catalyzes the biosynthesis of agmatine from arginine. The chain is Biosynthetic arginine decarboxylase from Prochlorococcus marinus (strain MIT 9312).